The chain runs to 605 residues: Tungsten-containing aldehyde ferredoxin oxidoreductase (605 aa).

Positions 76, 93, 95, 182, 183, 185, and 186 each coordinate tungstopterin. [4Fe-4S] cluster contacts are provided by C288, C291, and C295. Residues D338, L342, D343, R444, K450, D489, and L493 each coordinate tungstopterin. Residue C494 coordinates [4Fe-4S] cluster. Residue L495 participates in tungstopterin binding.

This sequence belongs to the AOR/FOR family. Monomer. Homodimer. Requires [4Fe-4S] cluster as cofactor. Tungstopterin is required as a cofactor.

The enzyme catalyses an aldehyde + 2 oxidized [2Fe-2S]-[ferredoxin] + H2O = a carboxylate + 2 reduced [2Fe-2S]-[ferredoxin] + 3 H(+). Inhibited by arsenite, iodoacetate and cyanide. Aldehyde ferredoxin oxidoreductase with a broad substrate specificity. Catalyzes the oxidation of a range of aliphatic aldehydes to their corresponding carboxylic acids. In vitro can use crotonaldehyde, acetaldehyde, formaldehyde, butyraldehyde or glyceraldehyde as substrate, using methyl viologen or ferredoxin, but not NAD(P), as the electron acceptor. Does not oxidize glucose or glyceraldehyde 3-phosphate. May be involved in a pyroglycolytic pathway. This chain is Tungsten-containing aldehyde ferredoxin oxidoreductase, found in Pyrococcus furiosus (strain ATCC 43587 / DSM 3638 / JCM 8422 / Vc1).